Reading from the N-terminus, the 157-residue chain is Small ribosomal subunit protein uS7 (157 aa).

Belongs to the universal ribosomal protein uS7 family. As to quaternary structure, part of the 30S ribosomal subunit. Contacts proteins S9 and S11.

One of the primary rRNA binding proteins, it binds directly to 16S rRNA where it nucleates assembly of the head domain of the 30S subunit. Is located at the subunit interface close to the decoding center, probably blocks exit of the E-site tRNA. The protein is Small ribosomal subunit protein uS7 of Protochlamydia amoebophila (strain UWE25).